We begin with the raw amino-acid sequence, 207 residues long: Small ribosomal subunit protein uS4 (207 aa).

The tract at residues 31 to 55 (KCKLDSKPGQHGRTSGARTSDYGTQ) is disordered. The segment covering 42-53 (GRTSGARTSDYG) has biased composition (polar residues). In terms of domain architecture, S4 RNA-binding spans 97–160 (SRLDNVVYRM…KKQARIIEAL (64 aa)).

It belongs to the universal ribosomal protein uS4 family. As to quaternary structure, part of the 30S ribosomal subunit. Contacts protein S5. The interaction surface between S4 and S5 is involved in control of translational fidelity.

In terms of biological role, one of the primary rRNA binding proteins, it binds directly to 16S rRNA where it nucleates assembly of the body of the 30S subunit. With S5 and S12 plays an important role in translational accuracy. The protein is Small ribosomal subunit protein uS4 of Burkholderia vietnamiensis (strain G4 / LMG 22486) (Burkholderia cepacia (strain R1808)).